The primary structure comprises 339 residues: DNA-directed RNA polymerase subunit alpha (339 aa).

The interval 1–235 is alpha N-terminal domain (alpha-NTD); it reads MVIQKNWQEL…DQLQIFVNFE (235 aa). Residues 251-339 form an alpha C-terminal domain (alpha-CTD) region; it reads FNPALLKKVD…DLAKRFEEHY (89 aa).

The protein belongs to the RNA polymerase alpha chain family. Homodimer. The RNAP catalytic core consists of 2 alpha, 1 beta, 1 beta' and 1 omega subunit. When a sigma factor is associated with the core the holoenzyme is formed, which can initiate transcription.

The enzyme catalyses RNA(n) + a ribonucleoside 5'-triphosphate = RNA(n+1) + diphosphate. Its function is as follows. DNA-dependent RNA polymerase catalyzes the transcription of DNA into RNA using the four ribonucleoside triphosphates as substrates. This is DNA-directed RNA polymerase subunit alpha from Methylobacterium sp. (strain 4-46).